Here is a 432-residue protein sequence, read N- to C-terminus: Adenylosuccinate synthetase (432 aa).

Residues 13–19 (GDEGKGK) and 41–43 (GHT) contribute to the GTP site. Aspartate 14 serves as the catalytic Proton acceptor. The Mg(2+) site is built by aspartate 14 and glycine 41. IMP-binding positions include 14-17 (DEGK), 39-42 (NAGH), threonine 130, arginine 144, glutamine 225, threonine 240, and arginine 304. Histidine 42 serves as the catalytic Proton donor. Substrate is bound at residue 300 to 306 (AVTGRPR). GTP-binding positions include arginine 306, 332–334 (KLD), and 415–417 (STG).

This sequence belongs to the adenylosuccinate synthetase family. As to quaternary structure, homodimer. The cofactor is Mg(2+).

It localises to the cytoplasm. The catalysed reaction is IMP + L-aspartate + GTP = N(6)-(1,2-dicarboxyethyl)-AMP + GDP + phosphate + 2 H(+). It functions in the pathway purine metabolism; AMP biosynthesis via de novo pathway; AMP from IMP: step 1/2. Its function is as follows. Plays an important role in the de novo pathway of purine nucleotide biosynthesis. Catalyzes the first committed step in the biosynthesis of AMP from IMP. The chain is Adenylosuccinate synthetase from Glaesserella parasuis serovar 5 (strain SH0165) (Haemophilus parasuis).